Here is a 446-residue protein sequence, read N- to C-terminus: Maltoporin (446 aa).

The first 25 residues, 1-25 (MMITLRKLPLAVAVAAGVMSAQAMA), serve as a signal peptide directing secretion.

Belongs to the porin LamB (TC 1.B.3) family. In terms of assembly, homotrimer formed of three 18-stranded antiparallel beta-barrels, containing three independent channels.

Its subcellular location is the cell outer membrane. The catalysed reaction is beta-maltose(in) = beta-maltose(out). Its function is as follows. Involved in the transport of maltose and maltodextrins. The polypeptide is Maltoporin (Escherichia coli (strain SE11)).